Here is a 425-residue protein sequence, read N- to C-terminus: Dihydroorotase (425 aa).

The Zn(2+) site is built by His56 and His58. Residues 58 to 60 and Asn90 each bind substrate; that span reads HWR. Asp147, His174, and His227 together coordinate Zn(2+). Position 273 (Asn273) interacts with substrate. Asp300 provides a ligand contact to Zn(2+). Asp300 is an active-site residue. Residues His304 and 318-319 each bind substrate; that span reads FG.

The protein belongs to the metallo-dependent hydrolases superfamily. DHOase family. Class I DHOase subfamily. Zn(2+) is required as a cofactor.

It catalyses the reaction (S)-dihydroorotate + H2O = N-carbamoyl-L-aspartate + H(+). It participates in pyrimidine metabolism; UMP biosynthesis via de novo pathway; (S)-dihydroorotate from bicarbonate: step 3/3. Its function is as follows. Catalyzes the reversible cyclization of carbamoyl aspartate to dihydroorotate. In Fusobacterium nucleatum subsp. nucleatum (strain ATCC 25586 / DSM 15643 / BCRC 10681 / CIP 101130 / JCM 8532 / KCTC 2640 / LMG 13131 / VPI 4355), this protein is Dihydroorotase.